Consider the following 579-residue polypeptide: MDICDISASQLATSPPPRTAIDFNSSIEESPVKRVKFSPELTKSFEETLSPTVTLVLRNNEEVIFDRYLLSFYSNYFRVLFSSKFRDSNSTTHRIRLISASDLHFLLTIPKAFEQGIKPNITLQKAIELLEPAAFLQMSIALDYISDIICKNLTHENIIKIFRLALLYHTTLAVRVWRSMVRKFQTLFATNVYLSLKENELIGLLTDKHLNLKSEDETTVVVNWIKHNSPLQSDRLTQFAQRNFSRRPQPDATKYEVIRTRQPMDAIVCFGGWASRGVAQKIEVCNTRSDRWQTCNFNYDIPNIHRAYHGIEVVEDKLIVYGGFDGIKQFQTTVLFDLSTKEWRRGANMNDKRCYVTSARVNDSYGRPLVFACGGMNGVSRLKTAEMYDYRADQWTEVANMTQMRSDGAVVTIDNKIVAIGGFDGRNIHQGGEVYDPVLDLWHPLSSNMRTRRTGCTAVSIMNQVCMIIGGFNGNRRLDSAEIYDMREGLWHPEPTLQTARSNFSACQMDTCYVYVAGGFDGQTTTKESERLDLRSKMWQALPDMAEAKSALRMVTLSDHPFLDELFDIPDDTGIVTSW.

The BTB domain occupies 51-119 (PTVTLVLRNN…PKAFEQGIKP (69 aa)). 6 Kelch repeats span residues 266-316 (AIVC…VVED), 317-363 (KLIV…RVND), 369-415 (LVFA…TIDN), 417-463 (IVAI…SIMN), 465-511 (VCMI…QMDT), and 513-559 (YVYV…TLSD).

The chain is Kelch repeat and BTB domain-containing protein F47D12.7 from Caenorhabditis elegans.